Reading from the N-terminus, the 410-residue chain is Cytosolic isocitrate dehydrogenase [NADP] (410 aa).

Residues 77-79 (TIT) and Arg84 contribute to the NADP(+) site. Residue Thr79 participates in substrate binding. Residues 96–102 (SPNGTIR), Arg111, and Arg134 each bind substrate. Lys260 provides a ligand contact to NADP(+). Positions 275 and 279 each coordinate Mn(2+). Residues 310–315 (GTVTRH) and Asn328 each bind NADP(+).

It belongs to the isocitrate and isopropylmalate dehydrogenases family. Mg(2+) is required as a cofactor. Mn(2+) serves as cofactor.

Its subcellular location is the cytoplasm. The protein resides in the cytosol. The enzyme catalyses D-threo-isocitrate + NADP(+) = 2-oxoglutarate + CO2 + NADPH. In terms of biological role, may supply 2-oxoglutarate for amino acid biosynthesis and ammonia assimilation via the glutamine synthetase/glutamate synthase (GS/GOGAT) pathway. May be involved in the production of NADPH to promote redox signaling or homeostasis in response to oxidative stress, or redox signaling linked to defense responses. This chain is Cytosolic isocitrate dehydrogenase [NADP], found in Arabidopsis thaliana (Mouse-ear cress).